The chain runs to 118 residues: NADH-quinone oxidoreductase subunit A (118 aa).

Transmembrane regions (helical) follow at residues 8–28, 61–81, and 86–106; these read ILIFFLTGFFLSIIILVLNYL, FMYALVFVLFDVETIFLYPWA, and VLGLFAFVEMVIFIGILVLGL.

This sequence belongs to the complex I subunit 3 family. In terms of assembly, NDH-1 is composed of 14 different subunits. Subunits NuoA, H, J, K, L, M, N constitute the membrane sector of the complex.

The protein localises to the cell membrane. The enzyme catalyses a quinone + NADH + 5 H(+)(in) = a quinol + NAD(+) + 4 H(+)(out). Functionally, NDH-1 shuttles electrons from NADH, via FMN and iron-sulfur (Fe-S) centers, to quinones in the respiratory chain. The immediate electron acceptor for the enzyme in this species is believed to be a menaquinone. Couples the redox reaction to proton translocation (for every two electrons transferred, four hydrogen ions are translocated across the cytoplasmic membrane), and thus conserves the redox energy in a proton gradient. This Carboxydothermus hydrogenoformans (strain ATCC BAA-161 / DSM 6008 / Z-2901) protein is NADH-quinone oxidoreductase subunit A.